The following is a 182-amino-acid chain: ATP-dependent protease subunit HslV (182 aa).

Threonine 12 is an active-site residue. The Na(+) site is built by alanine 167, cysteine 170, and threonine 173.

The protein belongs to the peptidase T1B family. HslV subfamily. A double ring-shaped homohexamer of HslV is capped on each side by a ring-shaped HslU homohexamer. The assembly of the HslU/HslV complex is dependent on binding of ATP.

It localises to the cytoplasm. It carries out the reaction ATP-dependent cleavage of peptide bonds with broad specificity.. Allosterically activated by HslU binding. Functionally, protease subunit of a proteasome-like degradation complex believed to be a general protein degrading machinery. In Chlorobium luteolum (strain DSM 273 / BCRC 81028 / 2530) (Pelodictyon luteolum), this protein is ATP-dependent protease subunit HslV.